Reading from the N-terminus, the 327-residue chain is Gamma-resorcylate decarboxylase (327 aa).

Zn(2+) contacts are provided by Glu8, His10, His164, and Asp287. Asp287 is a catalytic residue.

Belongs to the metallo-dependent hydrolases superfamily. ACMSD family. In terms of assembly, homotetramer. The cofactor is Zn(2+).

The catalysed reaction is 2,6-dihydroxybenzoate + H(+) = resorcinol + CO2. The enzyme catalyses 2,3-dihydroxybenzoate + H(+) = catechol + CO2. It functions in the pathway aromatic compound metabolism. With respect to regulation, insensitive to oxygen. Decarboxylation and carboxylation are inhibited by AgNO(3) and by diethyl pyrocarbonate, a histidine residue-specific inhibitor. Decarboxylation is also inhibited by HgCl(2) and activated by MgCl(2). In terms of biological role, involved in the gamma-resorcylate (2,6-dihydroxybenzoate) catabolism. Catalyzes the reversible decarboxylation of gamma-resorcylate to resorcinol. Also catalyzes the decarboxylation of 2,3-dihydroxybenzoate to catechol, but does not act on 2-hydroxybenzoic acid 3-hydroxybenzoic acid, 4-hydroxybenzoic acid, 3,4-dihydroxybenzoic acid, 2,5-dihydroxybenzoic acid, 2,3,4-trihydroxybenzoic acid, 3,4,5-trihydroxybenzoic acid, 4-aminobenzoic acid, o-hydroxyphenylacetic acid and vanillic acid. Resorcinol and catechol can both be carboxylated by the reverse reaction. The sequence is that of Gamma-resorcylate decarboxylase from Rhizobium radiobacter (Agrobacterium tumefaciens).